The primary structure comprises 595 residues: uncharacterized protein (595 aa).

3 disordered regions span residues 50 to 159 (VNPS…KTKK), 398 to 430 (TYPT…PPSL), and 450 to 595 (VTEG…SLDK). Positions 83–122 (SNKSSALKKSNKSSNKSSNKSSNKSSNKSSNKSSNKSSNK) are enriched in low complexity. Positions 123–132 (FPDKSDKSDS) are enriched in basic and acidic residues. Positions 137–146 (DNSDDSDDSS) are enriched in acidic residues. Residues 398–409 (TYPTTPLFSEPT) show a composition bias toward low complexity. The segment covering 410–420 (IPKPPQQPTTE) has biased composition (pro residues). A compositionally biased stretch (low complexity) spans 421 to 430 (PPSGFKPPSL). The segment covering 454 to 463 (KVVESDDHTS) has biased composition (basic and acidic residues). The span at 467-476 (IPPPPPPPPS) shows a compositional bias: pro residues. The span at 477 to 529 (ISSDNSSPNKSVKSSTKSSTKSSTKSSTKSSTKSSTKSPSKTPVKSPIKSSSK) shows a compositional bias: low complexity. Residues 530 to 542 (LSDKKSPTKKIES) are compositionally biased toward basic and acidic residues. Residues 544–553 (GESDSESDSE) show a composition bias toward acidic residues. Residues 559–570 (TKKSTNKIKKIT) show a composition bias toward basic residues. Residues 571 to 580 (NNKLENSNTK) are compositionally biased toward low complexity. A compositionally biased stretch (basic residues) spans 581–595 (NNKKFSKKKTISLDK).

This is an uncharacterized protein from Acanthamoeba polyphaga mimivirus (APMV).